A 579-amino-acid chain; its full sequence is Glypican-2 (579 aa).

The first 21 residues, 1–21 (MSALRPLLLLLLHLCPGLGPG), serve as a signal peptide directing secretion. O-linked (Xyl...) (heparan sulfate) serine glycosylation is found at Ser55, Ser92, and Ser155. Disordered stretches follow at residues 347 to 382 (GTPH…PTTA) and 483 to 552 (ALGQ…GRSR). Over residues 361–379 (APREEASRSWRASAEEERP) the composition is skewed to basic and acidic residues. O-linked (Xyl...) (heparan sulfate) serine glycosylation is found at Ser498 and Ser500. Positions 517–527 (VVPPARPPRPP) are enriched in pro residues. Ser556 carries GPI-anchor amidated serine lipidation. A propeptide spans 557–579 (SVGLHTPLVLLLLPSALTLLVLR) (removed in mature form).

This sequence belongs to the glypican family. In terms of assembly, interacts (via heparan sulfate) with PTN; this interaction promotes neurite outgrowth through binding of PTN with chondroitin sulfate of proteoglycans, thereby releasing PTPRS of chondroitin sulfate proteoglycans (CSPGs) and leading to binding with heparan sulfate of GPC2. Interacts (heparan sulfate chain) with MDK; this interaction is inhibited by heparin followed by chondroitin sulfate E; this interaction induces GPC2 clustering through heparan sulfate chain; this interaction induces neuronal cell adhesion and neurite outgrowth.

Its subcellular location is the cell membrane. The protein resides in the secreted. It localises to the extracellular space. Its function is as follows. Cell surface proteoglycan that bears heparan sulfate. May fulfill a function related to the motile behaviors of developing neurons. The protein is Glypican-2 (Gpc2) of Mus musculus (Mouse).